Reading from the N-terminus, the 919-residue chain is TRPM8 channel-associated factor 2 (919 aa).

The 300-residue stretch at 542–841 folds into the Peptidase M60 domain; that stretch reads DCWVSTGLYL…TYLQLQEAFG (300 aa).

This sequence belongs to the TCAF family. In terms of assembly, isoform 2 interacts with TRPM8 (via N-terminus and C-terminus domains); the interaction inhibits TRPM8 channel activity. Interacts with TRPV6. As to expression, isoform 2 is expressed in the prostate and in cancerous prostate samples.

The protein localises to the cell membrane. Functionally, negatively regulates the plasma membrane cation channel TRPM8 activity. Involved in the recruitment of TRPM8 to the cell surface. Promotes prostate cancer cell migration stimulation in a TRPM8-dependent manner. The sequence is that of TRPM8 channel-associated factor 2 from Homo sapiens (Human).